Reading from the N-terminus, the 223-residue chain is Small ribosomal subunit protein uS3 (223 aa).

The region spanning 39–107 (VREFLHKKLA…PVQINIEEVR (69 aa)) is the KH type-2 domain.

Belongs to the universal ribosomal protein uS3 family. As to quaternary structure, part of the 30S ribosomal subunit. Forms a tight complex with proteins S10 and S14.

Its function is as follows. Binds the lower part of the 30S subunit head. Binds mRNA in the 70S ribosome, positioning it for translation. The sequence is that of Small ribosomal subunit protein uS3 from Francisella tularensis subsp. novicida (strain U112).